The following is a 312-amino-acid chain: Tumor necrosis factor receptor type 1-associated DEATH domain protein (312 aa).

Residues Leu147 to Lys163 carry the Nuclear export signal motif. The interval Gly170 to Pro195 is disordered. Residues Pro179–Leu289 enclose the Death domain. The span at Leu180–Pro195 shows a compositional bias: pro residues. Positions Phe222–Leu289 are interaction with KRT14 and KRT18. Positions Arg231–Leu244 match the Nuclear localization signal motif. (Microbial infection) N-beta-linked (GlcNAc) arginine glycans are attached at residues Arg235 and Arg245.

Stimulation of TNF-alpha receptor TNFRSF1A leads to the formation of two distinct signaling complexes. Plasma membrane-bound complex I is composed of TNFRSF1A, TRADD, RIPK1, TRAF2 and BIRC2/c-IAP1 or BIRC3 which interacts with CHUCK/IKK-alpha, IKBKB/IKK-beta and IKBKG/IKK-gamma promoting cell survival. Subsequently, TRADD, RIPK1 and TRAF2 dissociate from TNFRSF1A and form cytoplasmic complex II with FADD and caspase CASP8 promoting cell apoptosis. Within complex I, interacts with TNFRSF1A/TNFR1, TRAF2 and kinase RIPK1. Within complex I, interacts with TRPC4AP; the interaction promotes NF-kappa B activation. UXT1 associates with complex I; the interaction prevents the formation of complex II. Within complex I Interacts with scaffold protein DAB2IP. Interacts with autophagy receptor SQSTM1. Interacts with E3 ligase TRIP12. Interacts with kinase HIPK2. Interacts with keratin KRT14. Interacts with keratin KRT18. Interacts with keratins KRT16 and KRT17. Interacts with FADD. Interacts with TOMM70. Interacts with TMC8; the interaction impairs the formation of complex I and facilites complex II formation. (Microbial infection) Glycosylated at Arg-235 by enteropathogenic E.coli protein NleB1, C.rodentium protein NleB and S.typhimurium proteins Ssek1 and Ssek3: arginine GlcNAcylation prevents homotypic/heterotypic death domain interactions and assembly of the oligomeric TNFRSF1A/TNFR1 complex, thereby disrupting TNF signaling. Found in all examined tissues.

It localises to the nucleus. It is found in the cytoplasm. Its subcellular location is the cytoskeleton. Functionally, adapter molecule for TNFRSF1A/TNFR1 that specifically associates with the cytoplasmic domain of activated TNFRSF1A/TNFR1 mediating its interaction with FADD. Overexpression of TRADD leads to two major TNF-induced responses, apoptosis and activation of NF-kappa-B. The nuclear form acts as a tumor suppressor by preventing ubiquitination and degradation of isoform p19ARF/ARF of CDKN2A by TRIP12: acts by interacting with TRIP12, leading to disrupt interaction between TRIP12 and isoform p19ARF/ARF of CDKN2A. This chain is Tumor necrosis factor receptor type 1-associated DEATH domain protein, found in Homo sapiens (Human).